Consider the following 131-residue polypeptide: Ribonuclease VapC13 (131 aa).

The PINc domain occupies 2–128 (ILVDSNIPMY…RGFDSYPGIK (127 aa)). D5 and D99 together coordinate Mg(2+).

This sequence belongs to the PINc/VapC protein family. The cofactor is Mg(2+).

Its subcellular location is the secreted. Functionally, toxic component of a type II toxin-antitoxin (TA) system. An RNase. The cognate antitoxin is VapB13. The polypeptide is Ribonuclease VapC13 (Mycobacterium tuberculosis (strain ATCC 25618 / H37Rv)).